Reading from the N-terminus, the 572-residue chain is MRTSQYLLSTQKETPADAEVISHQLMLRAGMIRKLASGLYTWLPTGVRVLKKVENIVREEMNNAGAIEVSMPVVQPADLWQESGRWEQYGPELLRFVDRGERPFVLGPTHEEVITDLIRGEINSYKQLPLNFFQIQTKFRDEVRPRFGVMRAREFLMKDAYSFHTTQESLQETYDAMYTAYSKIFSRMDLNFRAVLADTGSIGGSASHEFQVLAESGEDDIVFSTGSDYAANIEFAEALAPTEPRAPATEELRIVDTPNAKTIAELVEQFKLPIEKTVKTLLVHAHEESGHKLVALLVRGDHDLNEIKAEKLPQVAKPLTFASEEEIRAAIGAGPGSLGPVNLSLPVIADRSVAVMSDFGAGANIDGKHYFGINWERDLALPLVADLRNVVEGDISPDGKGTLQIKRGIEVGHIFQLGTKYSEVMKATVQGEDGRNQVMTMGCYGIGVSRVVAAAIEQNHDDRGIIWPDAIAPFQVAILPMNMHKSFRVKELAEELYTTLRSHGIDVILDDRKERPGVMFADMELIGVPHNIVIGDRNLDSEEVEYKNRRVGEKQMIKTSEIVEFLLSQIKR.

It belongs to the class-II aminoacyl-tRNA synthetase family. ProS type 1 subfamily. In terms of assembly, homodimer.

The protein localises to the cytoplasm. It catalyses the reaction tRNA(Pro) + L-proline + ATP = L-prolyl-tRNA(Pro) + AMP + diphosphate. Its function is as follows. Catalyzes the attachment of proline to tRNA(Pro) in a two-step reaction: proline is first activated by ATP to form Pro-AMP and then transferred to the acceptor end of tRNA(Pro). As ProRS can inadvertently accommodate and process non-cognate amino acids such as alanine and cysteine, to avoid such errors it has two additional distinct editing activities against alanine. One activity is designated as 'pretransfer' editing and involves the tRNA(Pro)-independent hydrolysis of activated Ala-AMP. The other activity is designated 'posttransfer' editing and involves deacylation of mischarged Ala-tRNA(Pro). The misacylated Cys-tRNA(Pro) is not edited by ProRS. The sequence is that of Proline--tRNA ligase from Yersinia pestis (strain Pestoides F).